The chain runs to 360 residues: Protein phosphatase 1L (360 aa).

At 1-25 the chain is on the extracellular side; sequence MIEDTMTLLSLLGRIMRYFLLRPET. The helical transmembrane segment at 26 to 42 threads the bilayer; that stretch reads LFLLCISLALWSYFFHT. The Cytoplasmic segment spans residues 43–360; the sequence is DEVKTIVKSS…FRNSSKTEEQ (318 aa). Positions 92–351 constitute a PPM-type phosphatase domain; it reads NVAVYSIQGR…DNITVMVVKF (260 aa). Mn(2+) contacts are provided by D128, G129, D302, and D342.

It belongs to the PP2C family. In terms of assembly, interacts with MAP3K7/TAK1. Interacts with MAP3K5. Requires Mg(2+) as cofactor. The cofactor is Mn(2+). In terms of tissue distribution, ubiquitous. Highly expressed in heart, placenta, lung, liver, kidney and pancreas.

It is found in the membrane. The catalysed reaction is O-phospho-L-seryl-[protein] + H2O = L-seryl-[protein] + phosphate. The enzyme catalyses O-phospho-L-threonyl-[protein] + H2O = L-threonyl-[protein] + phosphate. Its function is as follows. Acts as a suppressor of the SAPK signaling pathways by associating with and dephosphorylating MAP3K7/TAK1 and MAP3K5, and by attenuating the association between MAP3K7/TAK1 and MAP2K4 or MAP2K6. This Homo sapiens (Human) protein is Protein phosphatase 1L (PPM1L).